We begin with the raw amino-acid sequence, 341 residues long: Phosphate acyltransferase (341 aa).

The protein belongs to the PlsX family. In terms of assembly, homodimer. Probably interacts with PlsY.

The protein resides in the cytoplasm. It carries out the reaction a fatty acyl-[ACP] + phosphate = an acyl phosphate + holo-[ACP]. It functions in the pathway lipid metabolism; phospholipid metabolism. Functionally, catalyzes the reversible formation of acyl-phosphate (acyl-PO(4)) from acyl-[acyl-carrier-protein] (acyl-ACP). This enzyme utilizes acyl-ACP as fatty acyl donor, but not acyl-CoA. This chain is Phosphate acyltransferase, found in Vibrio atlanticus (strain LGP32) (Vibrio splendidus (strain Mel32)).